We begin with the raw amino-acid sequence, 159 residues long: Succinate dehydrogenase assembly factor 2, mitochondrial (159 aa).

Residues 1-14 (MASFCLSRCCALRG) constitute a mitochondrion transit peptide.

Belongs to the SDHAF2 family. As to quaternary structure, interacts with the flavoprotein subunit within the SDH catalytic dimer.

The protein localises to the mitochondrion matrix. Plays an essential role in the assembly of succinate dehydrogenase (SDH), an enzyme complex (also referred to as respiratory complex II) that is a component of both the tricarboxylic acid (TCA) cycle and the mitochondrial electron transport chain, and which couples the oxidation of succinate to fumarate with the reduction of ubiquinone (coenzyme Q) to ubiquinol. Required for flavinylation (covalent attachment of FAD) of the flavoprotein subunit of the SDH catalytic dimer. This Culex quinquefasciatus (Southern house mosquito) protein is Succinate dehydrogenase assembly factor 2, mitochondrial.